The sequence spans 356 residues: Phosphate acyltransferase (356 aa).

This sequence belongs to the PlsX family. As to quaternary structure, homodimer. Probably interacts with PlsY.

The protein localises to the cytoplasm. The catalysed reaction is a fatty acyl-[ACP] + phosphate = an acyl phosphate + holo-[ACP]. Its pathway is lipid metabolism; phospholipid metabolism. Catalyzes the reversible formation of acyl-phosphate (acyl-PO(4)) from acyl-[acyl-carrier-protein] (acyl-ACP). This enzyme utilizes acyl-ACP as fatty acyl donor, but not acyl-CoA. This is Phosphate acyltransferase from Bartonella henselae (strain ATCC 49882 / DSM 28221 / CCUG 30454 / Houston 1) (Rochalimaea henselae).